The chain runs to 273 residues: Dermonecrotic toxin LhSicTox-alphaIA2biii (273 aa).

His5 is an active-site residue. Mg(2+)-binding residues include Glu25 and Asp27. His41 functions as the Nucleophile in the catalytic mechanism. 2 disulfides stabilise this stretch: Cys45/Cys51 and Cys47/Cys190. Asp85 serves as a coordination point for Mg(2+).

The protein belongs to the arthropod phospholipase D family. Class II subfamily. Requires Mg(2+) as cofactor. As to expression, expressed by the venom gland.

It is found in the secreted. The catalysed reaction is an N-(acyl)-sphingosylphosphocholine = an N-(acyl)-sphingosyl-1,3-cyclic phosphate + choline. It carries out the reaction an N-(acyl)-sphingosylphosphoethanolamine = an N-(acyl)-sphingosyl-1,3-cyclic phosphate + ethanolamine. The enzyme catalyses a 1-acyl-sn-glycero-3-phosphocholine = a 1-acyl-sn-glycero-2,3-cyclic phosphate + choline. It catalyses the reaction a 1-acyl-sn-glycero-3-phosphoethanolamine = a 1-acyl-sn-glycero-2,3-cyclic phosphate + ethanolamine. Dermonecrotic toxins cleave the phosphodiester linkage between the phosphate and headgroup of certain phospholipids (sphingolipid and lysolipid substrates), forming an alcohol (often choline) and a cyclic phosphate. This toxin acts on sphingomyelin (SM). It may also act on ceramide phosphoethanolamine (CPE), lysophosphatidylcholine (LPC) and lysophosphatidylethanolamine (LPE), but not on lysophosphatidylserine (LPS), and lysophosphatidylglycerol (LPG). It acts by transphosphatidylation, releasing exclusively cyclic phosphate products as second products. Induces dermonecrosis, hemolysis, increased vascular permeability, edema, inflammatory response, and platelet aggregation. The chain is Dermonecrotic toxin LhSicTox-alphaIA2biii from Loxosceles hirsuta (Recluse spider).